The primary structure comprises 917 residues: Spermatogenesis-associated protein 31D3 (917 aa).

Residues 29-49 (FICLSGLGLFILYLFYMVLTL) traverse the membrane as a helical segment. Disordered regions lie at residues 55–80 (EKNN…KDRK), 152–195 (SVSP…PPPL), and 773–797 (SQET…LRSN). Positions 63–74 (HQGRARRKRKSV) are enriched in basic residues. Residues 152–163 (SVSPLASSASGA) are compositionally biased toward low complexity. Residues 164 to 177 (ESSFTLASTPSATT) show a composition bias toward polar residues. Basic and acidic residues predominate over residues 782–797 (LLHDPETSSEEDLRSN).

The protein belongs to the SPATA31 family.

The protein resides in the membrane. Its function is as follows. May play a role in spermatogenesis. This is Spermatogenesis-associated protein 31D3 (SPATA31D3) from Homo sapiens (Human).